We begin with the raw amino-acid sequence, 810 residues long: Phospholipase D alpha 2 (810 aa).

Residues 1–126 (MEECLLHGRL…LHGEEVDRWV (126 aa)) enclose the C2 domain. Asp-187 lines the Ca(2+) pocket. Positions 327 to 365 (TMFTHHQKIVVVDSEMPSGGSRSRRIVSFVGGLDLCDGR) constitute a PLD phosphodiesterase 1 domain. Catalysis depends on residues His-332, Lys-334, and Asp-339. A 1,2-diacyl-sn-glycero-3-phosphate is bound at residue His-332. Ca(2+)-binding residues include His-371 and His-405. The a 1,2-diacyl-sn-glycero-3-phosphate site is built by Gln-521 and His-661. The PLD phosphodiesterase 2 domain maps to 656–683 (FMIYVHTKMMIVDDEYIIIGSANINQRS). Residues His-661, Lys-663, and Asp-668 contribute to the active site. Glu-722 contacts Ca(2+).

This sequence belongs to the phospholipase D family. C2-PLD subfamily. Ca(2+) is required as a cofactor. In terms of tissue distribution, highly expressed in roots, stems and flowers, moderately in leaves, seedlings and siliques. Not detected in dry seeds.

It localises to the cytoplasm. The protein localises to the membrane. Its subcellular location is the vacuole. The protein resides in the cytoplasmic vesicle. It is found in the clathrin-coated vesicle. It catalyses the reaction a 1,2-diacyl-sn-glycero-3-phosphocholine + H2O = a 1,2-diacyl-sn-glycero-3-phosphate + choline + H(+). Its function is as follows. Hydrolyzes glycerol-phospholipids at the terminal phosphodiesteric bond to generate phosphatidic acids (PA). Plays an important role in various cellular processes, including phytohormone action and response to stress, characterized by acidification of the cell. This Arabidopsis thaliana (Mouse-ear cress) protein is Phospholipase D alpha 2.